The primary structure comprises 279 residues: tRNA (guanine-N(1)-)-methyltransferase (279 aa).

S-adenosyl-L-methionine is bound by residues glycine 132 and 152–157 (IGDYVL).

It belongs to the RNA methyltransferase TrmD family. Homodimer.

The protein resides in the cytoplasm. It catalyses the reaction guanosine(37) in tRNA + S-adenosyl-L-methionine = N(1)-methylguanosine(37) in tRNA + S-adenosyl-L-homocysteine + H(+). Its function is as follows. Specifically methylates guanosine-37 in various tRNAs. In Saccharophagus degradans (strain 2-40 / ATCC 43961 / DSM 17024), this protein is tRNA (guanine-N(1)-)-methyltransferase.